Here is a 538-residue protein sequence, read N- to C-terminus: SWM histone demethylase complex subunit phf2 (538 aa).

Disordered regions lie at residues 28 to 47, 98 to 150, and 198 to 222; these read RFPNDLHPTMFEGEESNQNG, EIES…SSPL, and TKSGRKVHRPNHFDPLVKLPTRRRG. The segment covering 98–111 has biased composition (basic and acidic residues); the sequence is EIESSKNQETDAKS. The segment at 232–288 adopts a PHD-type zinc-finger fold; it reads AMKCSVCQRLQSPPKNRIVFCDGCNTPFHQLCHEPYISDELLDSPNGEWFCDDCIRR. Positions 367-392 are enriched in polar residues; it reads GDQYLSLNNGTESQSKTTKHSTSLPS. The tract at residues 367 to 396 is disordered; the sequence is GDQYLSLNNGTESQSKTTKHSTSLPSTEPV.

Component of the SWM histone demethylase complex composed of at least lsd1, lsd2, phf1 and phf2.

It is found in the nucleus. In terms of biological role, component of the SWM histone demethylase complex that specifically demethylates H3K9me2, a specific tag for epigenetic transcriptional activation, thereby acting as a corepressor. Has a role in regulating heterochromatin propagation and euchromatic transcription. In Schizosaccharomyces pombe (strain 972 / ATCC 24843) (Fission yeast), this protein is SWM histone demethylase complex subunit phf2 (phf2).